Consider the following 97-residue polypeptide: Aspartyl/glutamyl-tRNA(Asn/Gln) amidotransferase subunit C (97 aa).

Belongs to the GatC family. Heterotrimer of A, B and C subunits.

It carries out the reaction L-glutamyl-tRNA(Gln) + L-glutamine + ATP + H2O = L-glutaminyl-tRNA(Gln) + L-glutamate + ADP + phosphate + H(+). The enzyme catalyses L-aspartyl-tRNA(Asn) + L-glutamine + ATP + H2O = L-asparaginyl-tRNA(Asn) + L-glutamate + ADP + phosphate + 2 H(+). Allows the formation of correctly charged Asn-tRNA(Asn) or Gln-tRNA(Gln) through the transamidation of misacylated Asp-tRNA(Asn) or Glu-tRNA(Gln) in organisms which lack either or both of asparaginyl-tRNA or glutaminyl-tRNA synthetases. The reaction takes place in the presence of glutamine and ATP through an activated phospho-Asp-tRNA(Asn) or phospho-Glu-tRNA(Gln). The protein is Aspartyl/glutamyl-tRNA(Asn/Gln) amidotransferase subunit C of Listeria monocytogenes serotype 4b (strain CLIP80459).